The chain runs to 974 residues: Receptor-like protein 7 (974 aa).

A signal peptide spans 1-24 (MSFLIRSICFLILIPSFLITFVSA). The Extracellular segment spans residues 25-930 (TQHLCHSDQK…EEEEEESFSW (906 aa)). N-linked (GlcNAc...) asparagine glycans are attached at residues N54 and N90. LRR repeat units follow at residues 96 to 120 (LRHLRDLNLANNNFNNSPIPAEFDK), 122 to 145 (TGLERLDLSQSSLSGQIPINLLQL), 147 to 166 (KLVSLDLSSSDFFGDESFHY), 181 to 204 (LRNLRELDMSYVKISSEIPEEFSN), 206 to 229 (RSLRSLNLNGCNLFGEFPSSILLI), and 230 to 252 (PNLQSIDLGNNPNLRGNLPVFHE). N253 carries N-linked (GlcNAc...) asparagine glycosylation. 5 LRR repeats span residues 254–277 (NSLLKLTILYTSFSGAIPDSISSL), 278–301 (KNLTSLTLSVSYFSGKIPFSLGNL), 302–325 (SHLSHLSLSSNNLIGEIPSSIGNL), 327–349 (QLTNFYVGGNKLSGNLPATLSNL), and 350–373 (TKLNTISLSSNQFTGSLPPSISQL). N279 and N300 each carry an N-linked (GlcNAc...) asparagine glycan. N-linked (GlcNAc...) asparagine glycosylation is present at N348. Residues 374-396 (SKLKFFFADDNPFIGAILSPLLK) form an LRR 12; degenerate repeat. LRR repeat units follow at residues 397-422 (IPSLTRIHLSYNQLNDLVGIENIFML), 425-448 (LETFYIYHYNYTKVRPLDLNVFSS), 454-472 (TLYISRIPISTTNITSDFP), 473-495 (SNLEYLSLRSCNITDFPEFIRKG), 496-519 (RNLQILDLSNNKIKGQVPDWLWRM), 521-542 (TLNSVDLSNNSLSGFHVSVKAS), 544-570 (ESQLTSVDLSSNAFQGPLFLPSKSLRY), 572-589 (SGSNNNFTGKIPRSICGL), 590-616 (SSLEILDLSNNNLNGSLPWCLETLMSS), 618-638 (SDLDLRNNSLSGSLPEIFMNA), 639-662 (TKLRSLDVSHNRMEGKLPGSLTGC), 664-685 (SLEVLNVGSNRINDMFPFELNS), 687-712 (QKLQVLVLHSNKFHGTLHNVDGVWFG), 713-737 (FPQLQIIDVSHNDFFGILPSDYFMN), 785-809 (LTIYTAIDLSGNQLHGKIPDSIGLL), 810-833 (KELRILNMSSNGFTGHIPSSLANL), 834-857 (KNLESLDISQNNISGEIPPELGTL), and 859-882 (SLAWINVSHNQLVGSIPQGTQFQR). N434, N466, and N484 each carry an N-linked (GlcNAc...) asparagine glycan. The N-linked (GlcNAc...) asparagine glycan is linked to N529. N577, N603, N624, and N637 each carry an N-linked (GlcNAc...) asparagine glycan. N737 carries an N-linked (GlcNAc...) asparagine glycan. Residues N816, N845, and N864 are each glycosylated (N-linked (GlcNAc...) asparagine). The tract at residues 899–923 (LENVCGHIKESTPTQTEPLETKEEE) is disordered. Residues 931-951 (IAAGLGFAPGVVFGLAMGYIV) form a helical membrane-spanning segment. Over 952–974 (VSYKHQWFMKTFGRSKQQNTRTR) the chain is Cytoplasmic.

It belongs to the RLP family.

It localises to the cell membrane. This is Receptor-like protein 7 from Arabidopsis thaliana (Mouse-ear cress).